The sequence spans 353 residues: Immune-associated nucleotide-binding protein 8 (353 aa).

Positions 1–10 (MANDQKNSES) are enriched in polar residues. The tract at residues 1–43 (MANDQKNSESFPAKEDHKKDDAAAPAEVDHKDEFSASQPHPVE) is disordered. The segment covering 12-34 (PAKEDHKKDDAAAPAEVDHKDEF) has biased composition (basic and acidic residues). The region spanning 40-248 (HPVENIVLVG…YTDEMYHMIK (209 aa)) is the AIG1-type G domain. Residues 49 to 56 (GRTGNGKS) form a G1 region. GTP-binding positions include 49 to 57 (GRTGNGKSA) and Ser70. The segment at 76-80 (GVTME) is G2. The interval 98–101 (DTPG) is G3. Residues 168–171 (TGGD) are G4. Residues 207 to 209 (DNK) form a G5 region. A GTP-binding site is contributed by Asn208. Positions 244-291 (YHMIKEENERHKKEQEELESKGHSEEQLAALMKELQIMNERNLKAMAE) form a coiled coil.

Belongs to the TRAFAC class TrmE-Era-EngA-EngB-Septin-like GTPase superfamily. AIG1/Toc34/Toc159-like paraseptin GTPase family. IAN subfamily. As to expression, mainly expressed in leaves.

The protein is Immune-associated nucleotide-binding protein 8 of Arabidopsis thaliana (Mouse-ear cress).